The sequence spans 176 residues: ATP-dependent protease subunit HslV (176 aa).

The active site involves T6. Residues S161, C164, and T167 each contribute to the Na(+) site.

Belongs to the peptidase T1B family. HslV subfamily. As to quaternary structure, a double ring-shaped homohexamer of HslV is capped on each side by a ring-shaped HslU homohexamer. The assembly of the HslU/HslV complex is dependent on binding of ATP.

The protein resides in the cytoplasm. The catalysed reaction is ATP-dependent cleavage of peptide bonds with broad specificity.. With respect to regulation, allosterically activated by HslU binding. Protease subunit of a proteasome-like degradation complex believed to be a general protein degrading machinery. The polypeptide is ATP-dependent protease subunit HslV (Thermosipho africanus (strain TCF52B)).